A 462-amino-acid chain; its full sequence is Probable Xaa-Pro aminopeptidase pepP (462 aa).

Mn(2+) is bound by residues Asp-259, Asp-270, Glu-393, and Glu-433.

Belongs to the peptidase M24B family. The cofactor is Mn(2+).

The catalysed reaction is Release of any N-terminal amino acid, including proline, that is linked to proline, even from a dipeptide or tripeptide.. In terms of biological role, catalyzes the removal of a penultimate prolyl residue from the N-termini of peptides. The protein is Probable Xaa-Pro aminopeptidase pepP (pepP) of Metarhizium robertsii (strain ARSEF 23 / ATCC MYA-3075) (Metarhizium anisopliae (strain ARSEF 23)).